Consider the following 466-residue polypeptide: Flagellum-specific ATP synthase (466 aa).

Residue serine 194–serine 201 coordinates ATP.

Belongs to the ATPase alpha/beta chains family.

It localises to the cytoplasm. The enzyme catalyses ATP + H2O + 4 H(+)(in) = ADP + phosphate + 5 H(+)(out). Its function is as follows. Probable catalytic subunit of a protein translocase for flagellum-specific export, or a proton translocase involved in local circuits at the flagellum. May be involved in a specialized protein export pathway that proceeds without signal peptide cleavage. The sequence is that of Flagellum-specific ATP synthase (fliI) from Buchnera aphidicola subsp. Schizaphis graminum (strain Sg).